A 577-amino-acid chain; its full sequence is Calcium-dependent protein kinase 22 (577 aa).

A lipid anchor (N-myristoyl glycine) is attached at Gly2. The 264-residue stretch at 105–368 (YRLGAELGRG…AKEVLEHPWL (264 aa)) folds into the Protein kinase domain. ATP is bound by residues 111-119 (LGRGEFGVT) and Lys134. The active-site Proton acceptor is Asp234. Residues 374–404 (APNVSLGEIVRSRLMQFSAMNKFKKKALGVV) form an autoinhibitory domain region. EF-hand domains are found at residues 411–446 (EEMD…NGHP), 447–482 (VPET…IKKM), 483–518 (SNEE…ELGP), and 520–553 (EQVV…GSDW). Residues Asp424, Asp426, Ser428, Asn430, Asp435, Asp460, Asp462, Asn464, Thr466, Glu471, Asp496, Asp498, Asn500, Glu507, Asp531, Asp533, Asp535, Arg537, and Glu542 each contribute to the Ca(2+) site.

This sequence belongs to the protein kinase superfamily. Ser/Thr protein kinase family. CDPK subfamily.

It is found in the membrane. The catalysed reaction is L-seryl-[protein] + ATP = O-phospho-L-seryl-[protein] + ADP + H(+). The enzyme catalyses L-threonyl-[protein] + ATP = O-phospho-L-threonyl-[protein] + ADP + H(+). With respect to regulation, activated by calcium. Autophosphorylation may play an important role in the regulation of the kinase activity. Its function is as follows. May play a role in signal transduction pathways that involve calcium as a second messenger. The polypeptide is Calcium-dependent protein kinase 22 (Oryza sativa subsp. japonica (Rice)).